We begin with the raw amino-acid sequence, 1388 residues long: CRISPR-associated endonuclease Cas9 2 (1388 aa).

The active-site For RuvC-like nuclease domain is D10. Mg(2+)-binding residues include D10, E763, and E767. The 158-residue stretch at 771–928 (TNQGKSNSQQ…DKAGFIQRQL (158 aa)) folds into the HNH Cas9-type domain. The active-site Proton acceptor for HNH nuclease domain is H847. Residue H990 coordinates Mg(2+). Positions 1100-1109 (EQNHGLDRGK) are enriched in basic and acidic residues. Residues 1100–1130 (EQNHGLDRGKPKGLFNANLSSKPKPNSNENL) are disordered. The interval 1102–1388 (NHGLDRGKPK…RIDLAKLGEG (287 aa)) is PAM-interacting domain (PI). Polar residues predominate over residues 1116 to 1129 (ANLSSKPKPNSNEN).

Belongs to the CRISPR-associated protein Cas9 family. Subtype II-A subfamily. Monomer. Binds crRNA and tracrRNA. It depends on Mg(2+) as a cofactor.

In terms of biological role, CRISPR (clustered regularly interspaced short palindromic repeat) is an adaptive immune system that provides protection against mobile genetic elements (viruses, transposable elements and conjugative plasmids). CRISPR clusters contain spacers, sequences complementary to antecedent mobile elements, and target invading nucleic acids. CRISPR clusters are transcribed and processed into CRISPR RNA (crRNA). In type II CRISPR systems correct processing of pre-crRNA requires a trans-encoded small RNA (tracrRNA), endogenous ribonuclease 3 (rnc) and this protein. The tracrRNA serves as a guide for ribonuclease 3-aided processing of pre-crRNA. Subsequently Cas9/crRNA/tracrRNA endonucleolytically cleaves linear or circular dsDNA target complementary to the spacer yielding blunt ends; Cas9 is inactive in the absence of the 2 guide RNAs (gRNA). Cas9 recognizes a 3'-G-rich protospacer adjacent motif (PAM, GGG in this organism) in the CRISPR repeat sequences to help distinguish self versus nonself, as targets within the bacterial CRISPR locus do not have PAMs. PAM recognition is also required for catalytic activity. Complements the gRNA coprocessing defect in a cas9 deletion in S.pyogenes strain 370, and cuts target DNA in Cas9:gRNAs mixing experiments with S.mutans strain UA159. This is CRISPR-associated endonuclease Cas9 2 from Streptococcus thermophilus (strain ATCC BAA-491 / LMD-9).